Consider the following 456-residue polypeptide: Exodeoxyribonuclease 7 large subunit (456 aa).

The protein belongs to the XseA family. As to quaternary structure, heterooligomer composed of large and small subunits.

Its subcellular location is the cytoplasm. The catalysed reaction is Exonucleolytic cleavage in either 5'- to 3'- or 3'- to 5'-direction to yield nucleoside 5'-phosphates.. Functionally, bidirectionally degrades single-stranded DNA into large acid-insoluble oligonucleotides, which are then degraded further into small acid-soluble oligonucleotides. This chain is Exodeoxyribonuclease 7 large subunit, found in Shigella boydii serotype 18 (strain CDC 3083-94 / BS512).